Reading from the N-terminus, the 275-residue chain is 3-methyl-2-oxobutanoate hydroxymethyltransferase (275 aa).

Residues Asp44 and Asp83 each contribute to the Mg(2+) site. 3-methyl-2-oxobutanoate-binding positions include 44 to 45 (DS), Asp83, and Lys113. Glu115 serves as a coordination point for Mg(2+). Residue Glu182 is the Proton acceptor of the active site.

The protein belongs to the PanB family. As to quaternary structure, homodecamer; pentamer of dimers. Requires Mg(2+) as cofactor.

Its subcellular location is the cytoplasm. The enzyme catalyses 3-methyl-2-oxobutanoate + (6R)-5,10-methylene-5,6,7,8-tetrahydrofolate + H2O = 2-dehydropantoate + (6S)-5,6,7,8-tetrahydrofolate. It functions in the pathway cofactor biosynthesis; (R)-pantothenate biosynthesis; (R)-pantoate from 3-methyl-2-oxobutanoate: step 1/2. Its function is as follows. Catalyzes the reversible reaction in which hydroxymethyl group from 5,10-methylenetetrahydrofolate is transferred onto alpha-ketoisovalerate to form ketopantoate. The polypeptide is 3-methyl-2-oxobutanoate hydroxymethyltransferase (Clostridium botulinum (strain Alaska E43 / Type E3)).